Reading from the N-terminus, the 429-residue chain is MSRNQQLFDRAQQTIPGGVNSPVRAFRSVGGTPRFITCAEGAYMWDADGQRYIDYIGSWGPMIVGHAHPDVVRAVQETAAHSFSFGAPTEAEIDMAEEICKLVPSIEQVRLVSSGTEATMSALRLARGFTGRDLIIKFEGCYHGHADSLLVKAGSGLLTFADTTQNAPSSAGVPADVTRHTMVLEYNNVAQLEEAFAQHRGEIAAVIVEVVAGNMNLVRASDAFLKAMRELCTRDGAVLIFDEVMTGFRVALGGAQSHYGITPDMTCLGKVIGGGMPAAAFGGRRDIMAKLAPLGGVYQAGTLSGNPLAVAAGLTTLRLIQAPGFYDKLTAQTRKLADGLSEAARAAGVPFAADAIGGMFGIYFRDGVPGSFAEVTKSDTARFNRFFHAMLDNGVYLAPSAFEAGFVSACHDDAILQATLDAARKAFAA.

The residue at position 270 (K270) is an N6-(pyridoxal phosphate)lysine.

The protein belongs to the class-III pyridoxal-phosphate-dependent aminotransferase family. HemL subfamily. In terms of assembly, homodimer. Pyridoxal 5'-phosphate is required as a cofactor.

It is found in the cytoplasm. The enzyme catalyses (S)-4-amino-5-oxopentanoate = 5-aminolevulinate. The protein operates within porphyrin-containing compound metabolism; protoporphyrin-IX biosynthesis; 5-aminolevulinate from L-glutamyl-tRNA(Glu): step 2/2. In Cupriavidus pinatubonensis (strain JMP 134 / LMG 1197) (Cupriavidus necator (strain JMP 134)), this protein is Glutamate-1-semialdehyde 2,1-aminomutase.